The primary structure comprises 369 residues: MKSGRFIGVMSGTSLDGVDVVLATIDEHRVAQLASLSWPIPVSLKQAVLDICQGQQLTLSQFGQLDTQLGQLFADAVNALLKEQNLQARDIVAIGCHGQTVWHEPTGVAPHTLQIGDNNQIVARTGITVVGDFRRRDIALGGQGAPLVPAFHHALLAHPTERRMVLNIGGIANLSLLIPGQPVGGYDTGPGNMLMDAWIWRQAGKPYDKDAEWARAGKVILPLLQNMLSDPYFSQPAPKSTGREYFNYGWLERHLRHFPGVDPRDVQATLAELTAVTISEQVLLSGGCERLMVCGGGSRNPLLMARLAALLPGTEVTTTDAVGISGDDMEALAFAWLAWRTLAGLPGNLPSVTGASQETVLGAIFPANP.

12–19 (GTSLDGVD) lines the ATP pocket.

Belongs to the anhydro-N-acetylmuramic acid kinase family.

It carries out the reaction 1,6-anhydro-N-acetyl-beta-muramate + ATP + H2O = N-acetyl-D-muramate 6-phosphate + ADP + H(+). It participates in amino-sugar metabolism; 1,6-anhydro-N-acetylmuramate degradation. The protein operates within cell wall biogenesis; peptidoglycan recycling. Its function is as follows. Catalyzes the specific phosphorylation of 1,6-anhydro-N-acetylmuramic acid (anhMurNAc) with the simultaneous cleavage of the 1,6-anhydro ring, generating MurNAc-6-P. Is required for the utilization of anhMurNAc either imported from the medium or derived from its own cell wall murein, and thus plays a role in cell wall recycling. The polypeptide is Anhydro-N-acetylmuramic acid kinase (Escherichia coli (strain K12 / MC4100 / BW2952)).